A 391-amino-acid chain; its full sequence is Flagellin (391 aa).

It belongs to the bacterial flagellin family.

The protein localises to the secreted. Its subcellular location is the bacterial flagellum. Flagellin is the subunit protein which polymerizes to form the filaments of bacterial flagella. This is Flagellin (flaA) from Bordetella bronchiseptica (strain ATCC BAA-588 / NCTC 13252 / RB50) (Alcaligenes bronchisepticus).